The chain runs to 200 residues: Large ribosomal subunit protein uL4 (200 aa).

The disordered stretch occupies residues 38–65; that stretch reads GRQGSKAQKTRSEVSGGGKKPWRQKGTG.

Belongs to the universal ribosomal protein uL4 family. As to quaternary structure, part of the 50S ribosomal subunit.

In terms of biological role, one of the primary rRNA binding proteins, this protein initially binds near the 5'-end of the 23S rRNA. It is important during the early stages of 50S assembly. It makes multiple contacts with different domains of the 23S rRNA in the assembled 50S subunit and ribosome. Forms part of the polypeptide exit tunnel. This chain is Large ribosomal subunit protein uL4, found in Pseudomonas aeruginosa (strain LESB58).